A 156-amino-acid chain; its full sequence is 6,7-dimethyl-8-ribityllumazine synthase (156 aa).

Residues Phe-24, 58-60 (AFE), and 82-84 (VII) contribute to the 5-amino-6-(D-ribitylamino)uracil site. 87 to 88 (ST) is a binding site for (2S)-2-hydroxy-3-oxobutyl phosphate. The Proton donor role is filled by His-90. Position 115 (Phe-115) interacts with 5-amino-6-(D-ribitylamino)uracil. Arg-129 is a binding site for (2S)-2-hydroxy-3-oxobutyl phosphate.

Belongs to the DMRL synthase family.

It catalyses the reaction (2S)-2-hydroxy-3-oxobutyl phosphate + 5-amino-6-(D-ribitylamino)uracil = 6,7-dimethyl-8-(1-D-ribityl)lumazine + phosphate + 2 H2O + H(+). It participates in cofactor biosynthesis; riboflavin biosynthesis; riboflavin from 2-hydroxy-3-oxobutyl phosphate and 5-amino-6-(D-ribitylamino)uracil: step 1/2. Its function is as follows. Catalyzes the formation of 6,7-dimethyl-8-ribityllumazine by condensation of 5-amino-6-(D-ribitylamino)uracil with 3,4-dihydroxy-2-butanone 4-phosphate. This is the penultimate step in the biosynthesis of riboflavin. The sequence is that of 6,7-dimethyl-8-ribityllumazine synthase from Chlorobaculum parvum (strain DSM 263 / NCIMB 8327) (Chlorobium vibrioforme subsp. thiosulfatophilum).